The primary structure comprises 485 residues: 6-phosphogluconate dehydrogenase, decarboxylating (485 aa).

Residues 12 to 17 (GLAVMG), 35 to 37 (NRT), 77 to 79 (VKA), and Asn105 each bind NADP(+). Substrate is bound by residues Asn105 and 131–133 (SGG). Lys186 functions as the Proton acceptor in the catalytic mechanism. 189 to 190 (HN) is a substrate binding site. The active-site Proton donor is the Glu193. 5 residues coordinate substrate: Tyr194, Lys263, Arg290, Arg449, and His455.

The protein belongs to the 6-phosphogluconate dehydrogenase family. As to quaternary structure, homodimer.

It catalyses the reaction 6-phospho-D-gluconate + NADP(+) = D-ribulose 5-phosphate + CO2 + NADPH. The protein operates within carbohydrate degradation; pentose phosphate pathway; D-ribulose 5-phosphate from D-glucose 6-phosphate (oxidative stage): step 3/3. Its function is as follows. Catalyzes the oxidative decarboxylation of 6-phosphogluconate to ribulose 5-phosphate and CO(2), with concomitant reduction of NADP to NADPH. The sequence is that of 6-phosphogluconate dehydrogenase, decarboxylating (6-PGD) from Cunninghamella elegans.